The chain runs to 77 residues: U11-lycotoxin-Ls1a (77 aa).

Positions 1–20 (MKLIILTGLVLFAIVSLIEA) are cleaved as a signal peptide. The propeptide occupies 21-26 (EEESGR).

Belongs to the neurotoxin 19 (CSTX) family. 10 (U11-Lctx) subfamily. In terms of processing, contains 4 disulfide bonds. In terms of tissue distribution, expressed by the venom gland.

The protein localises to the secreted. In Lycosa singoriensis (Wolf spider), this protein is U11-lycotoxin-Ls1a.